A 196-amino-acid polypeptide reads, in one-letter code: Ribosome-binding factor A (196 aa).

It belongs to the RbfA family. Monomer. Binds 30S ribosomal subunits, but not 50S ribosomal subunits or 70S ribosomes.

The protein localises to the cytoplasm. Functionally, one of several proteins that assist in the late maturation steps of the functional core of the 30S ribosomal subunit. Associates with free 30S ribosomal subunits (but not with 30S subunits that are part of 70S ribosomes or polysomes). Required for efficient processing of 16S rRNA. May interact with the 5'-terminal helix region of 16S rRNA. In Tropheryma whipplei (strain TW08/27) (Whipple's bacillus), this protein is Ribosome-binding factor A.